A 98-amino-acid chain; its full sequence is Feather keratin 1 (98 aa).

Belongs to the avian keratin family. In terms of assembly, the avian keratins (F-ker, S-ker, C-ker and B-ker) are a complex mixture of very similar polypeptides.

This is Feather keratin 1 from Gallus gallus (Chicken).